Reading from the N-terminus, the 417-residue chain is Blood group Rh(CE) polypeptide (417 aa).

Helical transmembrane passes span 12–32, 44–64, 77–97, 125–145, 172–192, 203–223, 238–258, 265–285, 287–307, 331–351, and 358–378; these read CLPL…YFFT, LVAS…GLGF, VAFN…LDGF, ISAG…MVLV, FYVF…KPLP, TIPS…WPSV, MFNT…GSSL, ISMT…GTSC, LIPS…ISIG, IFSL…VLHT, and MIGF…VIAL.

Belongs to the ammonium transporter (TC 2.A.49) family. Rh subfamily. As to quaternary structure, heterotrimer; a RHCE monomer interacts with a RHAG homodimer. Component of the ankyrin-1 complex in the erythrocyte, composed of ANK1, RHCE, RHAG, SLC4A1, EPB42, GYPA, GYPB and AQP1. Interacts (via the N- and C-terminal) with ANK1 (via ANk 1-5 repeats); mediates the primary membrane attachment site for ANK1. As to expression, restricted to tissues or cell lines expressing erythroid characters. Isoform 4g and isoform RhPI-Alpha are expressed in immature erythroblasts but not in mature erythroblasts.

It is found in the membrane. Functionally, component of the ankyrin-1 complex, a multiprotein complex involved in the stability and shape of the erythrocyte membrane. Mediates the primary membrane attachment site for ANK1 when associated with RHAG. May participate in the ammonium and carbon dioxide transport through the heterotrimer form. In Homo sapiens (Human), this protein is Blood group Rh(CE) polypeptide.